The primary structure comprises 159 residues: Endoribonuclease YbeY (159 aa).

Zn(2+) is bound by residues histidine 125, histidine 129, and histidine 135.

The protein belongs to the endoribonuclease YbeY family. The cofactor is Zn(2+).

It is found in the cytoplasm. Its function is as follows. Single strand-specific metallo-endoribonuclease involved in late-stage 70S ribosome quality control and in maturation of the 3' terminus of the 16S rRNA. In Enterococcus faecalis (strain ATCC 700802 / V583), this protein is Endoribonuclease YbeY.